The following is a 366-amino-acid chain: 3-dehydroquinate synthase (366 aa).

NAD(+)-binding positions include Asp-71–Lys-76, Gly-105–Asp-109, Thr-129–Thr-130, Lys-142, Lys-151, and Cys-169–Thr-172. Residues Glu-184, His-248, and His-265 each contribute to the Zn(2+) site.

This sequence belongs to the sugar phosphate cyclases superfamily. Dehydroquinate synthase family. It depends on NAD(+) as a cofactor. Requires Co(2+) as cofactor. Zn(2+) is required as a cofactor.

It is found in the cytoplasm. It carries out the reaction 7-phospho-2-dehydro-3-deoxy-D-arabino-heptonate = 3-dehydroquinate + phosphate. It functions in the pathway metabolic intermediate biosynthesis; chorismate biosynthesis; chorismate from D-erythrose 4-phosphate and phosphoenolpyruvate: step 2/7. Functionally, catalyzes the conversion of 3-deoxy-D-arabino-heptulosonate 7-phosphate (DAHP) to dehydroquinate (DHQ). This Photorhabdus laumondii subsp. laumondii (strain DSM 15139 / CIP 105565 / TT01) (Photorhabdus luminescens subsp. laumondii) protein is 3-dehydroquinate synthase.